The following is a 223-amino-acid chain: Cytidylate kinase (223 aa).

An ATP-binding site is contributed by Gly-10–Ser-18.

This sequence belongs to the cytidylate kinase family. Type 1 subfamily.

The protein localises to the cytoplasm. It catalyses the reaction CMP + ATP = CDP + ADP. It carries out the reaction dCMP + ATP = dCDP + ADP. The sequence is that of Cytidylate kinase from Pseudothermotoga lettingae (strain ATCC BAA-301 / DSM 14385 / NBRC 107922 / TMO) (Thermotoga lettingae).